The sequence spans 372 residues: MLKLVENVVERVSAEEQKPQEIQVPQSSIDEELKKIVEQIKARIYVVGVGGAGCNTVNRMMEVGVTGAKIIAVNTDAQDLLKIKAHQKILIGKELTRGLGAGNDPKIGEEAAKESERELREALEGADMVFVTCGLGGGTGTGAAPVIAEMAKKMGALTVSVVTLPFTMEGIRRAKNAEYGLKRLAKASDTVIVIPNDKLLEVAPKLPIQMAFKVADEILVQAVKGITELITKPGLVNLDFNDVRAVMKDGGVAMIGIGESDSEKRALEAAEQALNSPLLDVDISGAKGALISISGADVKLEEAQQIIEYVTRNVDPKAQVIWGIQLEPELEKTIRVMVIVTGVTSRYITFQEETPEPSEEEVPPVKIDIPEL.

Residues 51–55 (GAGCN), 138–140 (GTG), glutamate 169, arginine 173, and aspartate 216 contribute to the GTP site. The disordered stretch occupies residues 351–372 (QEETPEPSEEEVPPVKIDIPEL). Residues 353 to 362 (ETPEPSEEEV) show a composition bias toward acidic residues.

The protein belongs to the FtsZ family. As to quaternary structure, homodimer. Polymerizes to form a dynamic ring structure in a strictly GTP-dependent manner. Interacts directly with several other division proteins.

Its subcellular location is the cytoplasm. Its function is as follows. Essential cell division protein that forms a contractile ring structure (Z ring) at the future cell division site. The regulation of the ring assembly controls the timing and the location of cell division. One of the functions of the FtsZ ring is to recruit other cell division proteins to the septum to produce a new cell wall between the dividing cells. Binds GTP and shows GTPase activity. The protein is Cell division protein FtsZ 1 of Pyrococcus abyssi (strain GE5 / Orsay).